We begin with the raw amino-acid sequence, 471 residues long: MVFYRSVSLLSKLRSRAVQQSNVSNSVRWLQVQTSSGLDLRSELVQELIPEQQDRLKKIKSDMKGSIGNITVDMVLGGMRGMTGLLWKPHYLDPDEGIRFRGLSIPECQKVLPAAKPGGEPLPEGLLWLLLTGKVPSKEQVNSIVSGIAESGIISLIIMYTTIDALPVTAHPMTQFATGVMALQVQSEFQKAYEKGIHKSKYWEPTYEDSMNLIAQVPLVAAYVYRRMYKNGDTIPKDESLDYGANFAHMLGFSSSEMHELLMRLYVTIHSDHEGGNVSAHTGHLVASALSDPYLSFAAALNGLAGPLHGLANQEVLLWIKSVVEECGENISKEQLKDYVWKTLNSGKVVPGFGHGVLRKTVPRYTCQREFAMKHLPEDPLFQLVSKLYEVFLLFLQNLAKLKPWPNVDAHSGVLLNYYGLTEARYYTVLFGVSRALGICSQLIWDRALGLPLERPKSVTMEWLENQCKKA.

Residues H309, H355, and D409 contribute to the active site.

This sequence belongs to the citrate synthase family. As to quaternary structure, homodimer. In terms of tissue distribution, ubiquitous.

It is found in the mitochondrion matrix. It catalyses the reaction oxaloacetate + acetyl-CoA + H2O = citrate + CoA + H(+). It participates in carbohydrate metabolism; tricarboxylic acid cycle; isocitrate from oxaloacetate: step 1/2. This chain is Citrate synthase, mitochondrial, found in Solanum tuberosum (Potato).